The sequence spans 240 residues: ATP-dependent dethiobiotin synthetase BioD (240 aa).

15–20 (EIGKTF) provides a ligand contact to ATP. Residue Thr19 coordinates Mg(2+). The active site involves Lys40. ATP is bound by residues Asp57, 118–121 (EGVG), and 178–179 (NR). Mg(2+) is bound by residues Asp57 and Glu118.

This sequence belongs to the dethiobiotin synthetase family. Homodimer. Mg(2+) is required as a cofactor.

It is found in the cytoplasm. The catalysed reaction is (7R,8S)-7,8-diammoniononanoate + CO2 + ATP = (4R,5S)-dethiobiotin + ADP + phosphate + 3 H(+). The protein operates within cofactor biosynthesis; biotin biosynthesis; biotin from 7,8-diaminononanoate: step 1/2. Its function is as follows. Catalyzes a mechanistically unusual reaction, the ATP-dependent insertion of CO2 between the N7 and N8 nitrogen atoms of 7,8-diaminopelargonic acid (DAPA, also called 7,8-diammoniononanoate) to form a ureido ring. This Burkholderia mallei (strain NCTC 10247) protein is ATP-dependent dethiobiotin synthetase BioD.